Consider the following 490-residue polypeptide: Betaine aldehyde dehydrogenase (490 aa).

K(+) contacts are provided by threonine 26, isoleucine 27, and aspartate 93. Residue 150 to 152 (GAW) coordinates NAD(+). Lysine 162 (charge relay system) is an active-site residue. Position 176–179 (176–179 (KPSE)) interacts with NAD(+). Valine 180 provides a ligand contact to K(+). 230–233 (GVAS) lines the NAD(+) pocket. Leucine 246 serves as a coordination point for K(+). Glutamate 252 serves as the catalytic Proton acceptor. Glycine 254, cysteine 286, and glutamate 387 together coordinate NAD(+). Cysteine 286 functions as the Nucleophile in the catalytic mechanism. The residue at position 286 (cysteine 286) is a Cysteine sulfenic acid (-SOH). K(+) contacts are provided by lysine 457 and glycine 460. Glutamate 464 serves as the catalytic Charge relay system.

The protein belongs to the aldehyde dehydrogenase family. As to quaternary structure, dimer of dimers. Requires K(+) as cofactor.

It catalyses the reaction betaine aldehyde + NAD(+) + H2O = glycine betaine + NADH + 2 H(+). It functions in the pathway amine and polyamine biosynthesis; betaine biosynthesis via choline pathway; betaine from betaine aldehyde: step 1/1. Involved in the biosynthesis of the osmoprotectant glycine betaine. Catalyzes the irreversible oxidation of betaine aldehyde to the corresponding acid. The protein is Betaine aldehyde dehydrogenase of Escherichia coli (strain SMS-3-5 / SECEC).